The chain runs to 186 residues: MKNVNDSFVSLGHWPFAGSFGFNTDILATNPINLSVVLGVLIFFGKGVLNDLLDNRKQRILSTIRNSEELRGGAIEQLEKAWARLRKVEMEADEFRVNGYSEIEREKMNLIIATNENLERLENYKNETIHFEQQRAINQVRQRVFQQALQGALGTLKSCLNSELHLRTISDNIGTLGDMNMKEITD.

Residues 27–49 (LATNPINLSVVLGVLIFFGKGVL) traverse the membrane as a helical segment.

Belongs to the ATPase B chain family. In terms of assembly, F-type ATPases have 2 components, F(1) - the catalytic core - and F(0) - the membrane proton channel. F(1) has five subunits: alpha(3), beta(3), gamma(1), delta(1), epsilon(1). F(0) has four main subunits: a(1), b(1), b'(1) and c(10-14). The alpha and beta chains form an alternating ring which encloses part of the gamma chain. F(1) is attached to F(0) by a central stalk formed by the gamma and epsilon chains, while a peripheral stalk is formed by the delta, b and b' chains.

It is found in the plastid. The protein localises to the chloroplast thylakoid membrane. Functionally, f(1)F(0) ATP synthase produces ATP from ADP in the presence of a proton or sodium gradient. F-type ATPases consist of two structural domains, F(1) containing the extramembraneous catalytic core and F(0) containing the membrane proton channel, linked together by a central stalk and a peripheral stalk. During catalysis, ATP synthesis in the catalytic domain of F(1) is coupled via a rotary mechanism of the central stalk subunits to proton translocation. In terms of biological role, component of the F(0) channel, it forms part of the peripheral stalk, linking F(1) to F(0). The protein is ATP synthase subunit b, chloroplastic of Illicium oligandrum (Star anise).